Consider the following 224-residue polypeptide: 7-cyano-7-deazaguanine synthase (224 aa).

Residue 9-19 (ISGGMDSTLCA) coordinates ATP. Residues Cys190, Cys198, Cys201, and Cys204 each contribute to the Zn(2+) site.

This sequence belongs to the QueC family. The cofactor is Zn(2+).

The catalysed reaction is 7-carboxy-7-deazaguanine + NH4(+) + ATP = 7-cyano-7-deazaguanine + ADP + phosphate + H2O + H(+). Its pathway is purine metabolism; 7-cyano-7-deazaguanine biosynthesis. Functionally, catalyzes the ATP-dependent conversion of 7-carboxy-7-deazaguanine (CDG) to 7-cyano-7-deazaguanine (preQ(0)). This Campylobacter jejuni (strain RM1221) protein is 7-cyano-7-deazaguanine synthase.